The primary structure comprises 387 residues: Ferrochelatase (387 aa).

The Fe cation site is built by histidine 196 and glutamate 277.

This sequence belongs to the ferrochelatase family.

It is found in the cytoplasm. It catalyses the reaction heme b + 2 H(+) = protoporphyrin IX + Fe(2+). It functions in the pathway porphyrin-containing compound metabolism; protoheme biosynthesis; protoheme from protoporphyrin-IX: step 1/1. Functionally, catalyzes the ferrous insertion into protoporphyrin IX. This chain is Ferrochelatase, found in Synechococcus elongatus (strain ATCC 33912 / PCC 7942 / FACHB-805) (Anacystis nidulans R2).